Reading from the N-terminus, the 1464-residue chain is Neuropathy target esterase sws (1464 aa).

Topologically, residues 1-34 (MDVLELLRASATGCYNTIFSEAWHQYVHKQIAAA) are lumenal. Residues 35–55 (VYWYGALFLLGVLLFVWFLYF) traverse the membrane as a helical segment. Over 56-1464 (KRLARLRLRD…GNTTNNDTKN (1409 aa)) the chain is Cytoplasmic. 176–303 (IFGHFEKPIF…IRVIQVIMIR (128 aa)) is an a nucleoside 3',5'-cyclic phosphate binding site. Disordered regions lie at residues 329–393 (NKNS…LHYH) and 409–438 (QQQQSLNSPRRNSTAHVSEAAAASTASSPT). Residues 338-367 (TGQTTSNVQSQTSQATQSRPSGTTRTPTSP) show a composition bias toward low complexity. The segment covering 409–420 (QQQQSLNSPRRN) has biased composition (polar residues). A Phosphoserine modification is found at Ser421. Low complexity predominate over residues 422–438 (TAHVSEAAAASTASSPT). Residues 456-586 (ELGL…VVRR) and 575-702 (IVLG…LSHR) contribute to the a nucleoside 3',5'-cyclic phosphate site. Positions 928–1094 (LVLGGGGARG…VNNLPGHLWR (167 aa)) constitute a PNPLA domain. The GXGXXG motif lies at 932-937 (GGGARG). Residues 959–963 (GVSIG) carry the GXSXG motif. Ser961 (nucleophile) is an active-site residue. The active-site Proton acceptor is Asp1081. Residues 1081–1083 (DGG) carry the DGA/G motif. Ser1175 carries the post-translational modification Phosphoserine. 2 disordered regions span residues 1352-1374 (VDKATQSTPTLPDKRSVQTPTPS) and 1400-1464 (ATNT…DTKN). Residues 1429 to 1444 (KRTEQDEHELEHEQVV) are compositionally biased toward basic and acidic residues. The segment covering 1450–1464 (MDKQQGNTTNNDTKN) has biased composition (polar residues).

Belongs to the NTE family. As to quaternary structure, interacts with Pka-C3; interaction inhibits the catalytic function of Pka-C3 and the esterase activity of sws.

The protein localises to the endoplasmic reticulum membrane. It catalyses the reaction a 1-acyl-sn-glycero-3-phosphocholine + H2O = sn-glycerol 3-phosphocholine + a fatty acid + H(+). In terms of biological role, phospholipase B that deacylates intracellular phosphatidylcholine (PtdCho), generating glycerophosphocholine (GroPtdCho). This deacylation occurs at both sn-2 and sn-1 positions of PtdCho. Its specific chemical modification by certain organophosphorus (OP) compounds leads to distal axonopathy. Plays a role in the signaling mechanism between neurons and glia that regulates glia wrapping during development of the adult brain. Essential for membrane lipid homeostasis and cell survival in both neurons and glia of the adult brain. The chain is Neuropathy target esterase sws from Drosophila grimshawi (Hawaiian fruit fly).